A 115-amino-acid chain; its full sequence is Phosphoribosyl-AMP cyclohydrolase (115 aa).

Asp-80 is a binding site for Mg(2+). Cys-81 contacts Zn(2+). Mg(2+) is bound by residues Asp-82 and Asp-84. Zn(2+) is bound by residues Cys-97 and Cys-104.

The protein belongs to the PRA-CH family. As to quaternary structure, homodimer. Requires Mg(2+) as cofactor. Zn(2+) is required as a cofactor.

It is found in the cytoplasm. It catalyses the reaction 1-(5-phospho-beta-D-ribosyl)-5'-AMP + H2O = 1-(5-phospho-beta-D-ribosyl)-5-[(5-phospho-beta-D-ribosylamino)methylideneamino]imidazole-4-carboxamide. Its pathway is amino-acid biosynthesis; L-histidine biosynthesis; L-histidine from 5-phospho-alpha-D-ribose 1-diphosphate: step 3/9. Functionally, catalyzes the hydrolysis of the adenine ring of phosphoribosyl-AMP. In Mycobacterium bovis (strain ATCC BAA-935 / AF2122/97), this protein is Phosphoribosyl-AMP cyclohydrolase.